A 271-amino-acid chain; its full sequence is tRNA (guanine-N(1)-)-methyltransferase (271 aa).

Residues Gly-120 and 145–150 (IGDYVL) each bind S-adenosyl-L-methionine.

The protein belongs to the RNA methyltransferase TrmD family. In terms of assembly, homodimer.

It localises to the cytoplasm. The catalysed reaction is guanosine(37) in tRNA + S-adenosyl-L-methionine = N(1)-methylguanosine(37) in tRNA + S-adenosyl-L-homocysteine + H(+). Functionally, specifically methylates guanosine-37 in various tRNAs. In Bifidobacterium longum (strain NCC 2705), this protein is tRNA (guanine-N(1)-)-methyltransferase.